Here is a 157-residue protein sequence, read N- to C-terminus: Glycine-rich RNA-binding protein (157 aa).

The RRM domain occupies 6 to 84 (YRCFVGGLAW…RNITVNEAQS (79 aa)). Positions 70–157 (QELDGRNITV…YGGGGGGSRW (88 aa)) are disordered. 2 stretches are compositionally biased toward gly residues: residues 86-138 (GSGG…GGYG) and 145-157 (DGGY…GSRW).

May play a role in the biosynthesis and processing of heterogeneous nuclear RNA and in the maturation of specific mRNAs in response to wounding. The sequence is that of Glycine-rich RNA-binding protein from Daucus carota (Wild carrot).